The chain runs to 393 residues: Lipid-A-disaccharide synthase (393 aa).

It belongs to the LpxB family.

The enzyme catalyses a lipid X + a UDP-2-N,3-O-bis[(3R)-3-hydroxyacyl]-alpha-D-glucosamine = a lipid A disaccharide + UDP + H(+). It functions in the pathway bacterial outer membrane biogenesis; LPS lipid A biosynthesis. Functionally, condensation of UDP-2,3-diacylglucosamine and 2,3-diacylglucosamine-1-phosphate to form lipid A disaccharide, a precursor of lipid A, a phosphorylated glycolipid that anchors the lipopolysaccharide to the outer membrane of the cell. This chain is Lipid-A-disaccharide synthase, found in Colwellia psychrerythraea (strain 34H / ATCC BAA-681) (Vibrio psychroerythus).